Reading from the N-terminus, the 518-residue chain is Tyrosine/DOPA decarboxylase 1 (518 aa).

At lysine 321 the chain carries N6-(pyridoxal phosphate)lysine.

Belongs to the group II decarboxylase family. As to quaternary structure, homodimer. The cofactor is pyridoxal 5'-phosphate. In terms of tissue distribution, predominantly expressed in the roots.

It carries out the reaction L-tyrosine + H(+) = tyramine + CO2. The enzyme catalyses L-dopa + H(+) = dopamine + CO2. It catalyses the reaction 5-hydroxy-L-tryptophan + H(+) = serotonin + CO2. In terms of biological role, marginally higher substrate specificity for L-DOPA over L-tyrosine. The protein is Tyrosine/DOPA decarboxylase 1 (TYDC1) of Papaver somniferum (Opium poppy).